The following is a 480-amino-acid chain: Ribulose bisphosphate carboxylase large chain (480 aa).

A propeptide spanning residues 1 to 2 (MS) is cleaved from the precursor. At proline 3 the chain carries N-acetylproline. Lysine 14 bears the N6,N6,N6-trimethyllysine mark. Residues asparagine 123 and threonine 173 each coordinate substrate. The active-site Proton acceptor is the lysine 175. Lysine 177 lines the substrate pocket. Lysine 201, aspartate 203, and glutamate 204 together coordinate Mg(2+). Residue lysine 201 is modified to N6-carboxylysine. The Proton acceptor role is filled by histidine 294. The substrate site is built by arginine 295, histidine 327, and serine 379.

It belongs to the RuBisCO large chain family. Type I subfamily. As to quaternary structure, heterohexadecamer of 8 large chains and 8 small chains; disulfide-linked. The disulfide link is formed within the large subunit homodimers. Mg(2+) is required as a cofactor. Post-translationally, the disulfide bond which can form in the large chain dimeric partners within the hexadecamer appears to be associated with oxidative stress and protein turnover.

Its subcellular location is the plastid. It localises to the chloroplast. The enzyme catalyses 2 (2R)-3-phosphoglycerate + 2 H(+) = D-ribulose 1,5-bisphosphate + CO2 + H2O. It carries out the reaction D-ribulose 1,5-bisphosphate + O2 = 2-phosphoglycolate + (2R)-3-phosphoglycerate + 2 H(+). Its function is as follows. RuBisCO catalyzes two reactions: the carboxylation of D-ribulose 1,5-bisphosphate, the primary event in carbon dioxide fixation, as well as the oxidative fragmentation of the pentose substrate in the photorespiration process. Both reactions occur simultaneously and in competition at the same active site. In Gossypium barbadense (Sea Island cotton), this protein is Ribulose bisphosphate carboxylase large chain.